Consider the following 878-residue polypeptide: Phosphoenolpyruvate carboxylase (878 aa).

Active-site residues include H140 and K545.

It belongs to the PEPCase type 1 family. Mg(2+) is required as a cofactor.

The enzyme catalyses oxaloacetate + phosphate = phosphoenolpyruvate + hydrogencarbonate. Its function is as follows. Forms oxaloacetate, a four-carbon dicarboxylic acid source for the tricarboxylic acid cycle. The polypeptide is Phosphoenolpyruvate carboxylase (Pseudomonas syringae pv. syringae (strain B728a)).